The following is a 237-amino-acid chain: Demethylmenaquinone methyltransferase (237 aa).

Residues Thr-58, Asp-79, and 106 to 107 (NA) contribute to the S-adenosyl-L-methionine site.

Belongs to the class I-like SAM-binding methyltransferase superfamily. MenG/UbiE family.

It catalyses the reaction a 2-demethylmenaquinol + S-adenosyl-L-methionine = a menaquinol + S-adenosyl-L-homocysteine + H(+). It participates in quinol/quinone metabolism; menaquinone biosynthesis; menaquinol from 1,4-dihydroxy-2-naphthoate: step 2/2. Its function is as follows. Methyltransferase required for the conversion of demethylmenaquinol (DMKH2) to menaquinol (MKH2). This Bacillus mycoides (strain KBAB4) (Bacillus weihenstephanensis) protein is Demethylmenaquinone methyltransferase.